Reading from the N-terminus, the 373-residue chain is Dual-specificity RNA methyltransferase RlmN (373 aa).

Glu94 acts as the Proton acceptor in catalysis. The Radical SAM core domain occupies Glu100–Asp339. Cys107 and Cys344 are disulfide-bonded. 3 residues coordinate [4Fe-4S] cluster: Cys114, Cys118, and Cys121. Residues Gly168 to Glu169, Ser200, Ser222 to His224, and Asn301 each bind S-adenosyl-L-methionine. The active-site S-methylcysteine intermediate is Cys344.

The protein belongs to the radical SAM superfamily. RlmN family. It depends on [4Fe-4S] cluster as a cofactor.

The protein localises to the cytoplasm. The catalysed reaction is adenosine(2503) in 23S rRNA + 2 reduced [2Fe-2S]-[ferredoxin] + 2 S-adenosyl-L-methionine = 2-methyladenosine(2503) in 23S rRNA + 5'-deoxyadenosine + L-methionine + 2 oxidized [2Fe-2S]-[ferredoxin] + S-adenosyl-L-homocysteine. It carries out the reaction adenosine(37) in tRNA + 2 reduced [2Fe-2S]-[ferredoxin] + 2 S-adenosyl-L-methionine = 2-methyladenosine(37) in tRNA + 5'-deoxyadenosine + L-methionine + 2 oxidized [2Fe-2S]-[ferredoxin] + S-adenosyl-L-homocysteine. Its function is as follows. Specifically methylates position 2 of adenine 2503 in 23S rRNA and position 2 of adenine 37 in tRNAs. m2A2503 modification seems to play a crucial role in the proofreading step occurring at the peptidyl transferase center and thus would serve to optimize ribosomal fidelity. The polypeptide is Dual-specificity RNA methyltransferase RlmN (Tolumonas auensis (strain DSM 9187 / NBRC 110442 / TA 4)).